The sequence spans 57 residues: Granulin-1 (57 aa).

Cystine bridges form between cysteine 4-cysteine 16 and cysteine 10-cysteine 26.

This sequence belongs to the granulin family. Post-translationally, granulins are disulfide bridged. As to expression, ubiquitous.

The protein resides in the secreted. Its function is as follows. Granulins have possible cytokine-like activity. They may play a role in inflammation, wound repair, and tissue remodeling. This Cyprinus carpio (Common carp) protein is Granulin-1.